Reading from the N-terminus, the 200-residue chain is Ras-related protein Rab-7b (200 aa).

GTP is bound by residues 15–22 (GALGVGKT), 34–40 (YEDYQTT), 63–67 (DTGGQ), 124–127 (NKID), and 154–155 (AK). 2 short sequence motifs (switch) span residues 28-41 (YVHK…QTTL) and 67-82 (QERF…KGSD). Ser-186 carries the post-translational modification Phosphoserine. S-geranylgeranyl cysteine attachment occurs at residues Cys-199 and Cys-200.

The protein belongs to the small GTPase superfamily. Rab family.

It localises to the late endosome. It is found in the lysosome. The protein localises to the golgi apparatus. The protein resides in the trans-Golgi network. Its subcellular location is the cytoplasmic vesicle. It localises to the phagosome. It is found in the phagosome membrane. Controls vesicular trafficking from endosomes to the trans-Golgi network (TGN). Acts as a negative regulator of TLR9 signaling and can suppress TLR9-triggered TNFA, IL6, and IFNB production in macrophages by promoting TLR9 lysosomal degradation. Also negatively regulates TLR4 signaling in macrophages by promoting lysosomal degradation of TLR4. Promotes megakaryocytic differentiation by increasing NF-kappa-B-dependent IL6 production and subsequently enhancing the association of STAT3 with GATA1. Not involved in the regulation of the EGF- and EGFR degradation pathway. The sequence is that of Ras-related protein Rab-7b (RAB7B) from Bos taurus (Bovine).